A 558-amino-acid polypeptide reads, in one-letter code: Zeta-carotene desaturase, chloroplastic/chromoplastic (558 aa).

The transit peptide at 1–27 (MASSVVFAATGSLSVPPLKSRRFYVNS) directs the protein to the chloroplast and chromoplast.

The protein belongs to the zeta carotene desaturase family. Requires decylplastoquinone as cofactor. 6-decylubiquinone serves as cofactor. As to expression, highly expressed in leaves. Expressed at low levels in flowers and siliques.

It localises to the plastid. It is found in the chloroplast. Its subcellular location is the chromoplast. The catalysed reaction is 9,9'-di-cis-zeta-carotene + 2 a quinone = 7,7',9,9'-tetra-cis-lycopene + 2 a quinol. The protein operates within carotenoid biosynthesis; lycopene biosynthesis. Functionally, plays a crucial role in plant growth and development. Is essential for the biosynthesis of carotenoids. Carotenoids are involved in different physiological processes, including coloration, photoprotection, biosynthesis of abscisic acid (ABA) and chloroplast biogenesis. Catalyzes the conversion of zeta-carotene to lycopene via the intermediary of neurosporene. It carries out two consecutive desaturations (introduction of double bonds) at positions C-7 and C-7'. Shows stereoselectivity toward trans C15-C15'zeta-carotene double bond. The zeta-carotene produced by the phytoene desaturase PDS has a C15-C15' double bond in the cis configuration and it requires isomerization before being recognized as substrate by ZDS. The main product is 7,9,7',9'-tetra-cis-lycopene (pro-lycopene). In Arabidopsis thaliana (Mouse-ear cress), this protein is Zeta-carotene desaturase, chloroplastic/chromoplastic.